A 156-amino-acid chain; its full sequence is Riboflavin synthase (156 aa).

It belongs to the DMRL synthase family.

It carries out the reaction 2 6,7-dimethyl-8-(1-D-ribityl)lumazine + H(+) = 5-amino-6-(D-ribitylamino)uracil + riboflavin. It participates in cofactor biosynthesis; riboflavin biosynthesis; riboflavin from 2-hydroxy-3-oxobutyl phosphate and 5-amino-6-(D-ribitylamino)uracil: step 2/2. The polypeptide is Riboflavin synthase (ribC) (Methanocaldococcus jannaschii (strain ATCC 43067 / DSM 2661 / JAL-1 / JCM 10045 / NBRC 100440) (Methanococcus jannaschii)).